An 88-amino-acid chain; its full sequence is Small ribosomal subunit protein bS18B (88 aa).

It belongs to the bacterial ribosomal protein bS18 family. As to quaternary structure, part of the 30S ribosomal subunit. Forms a tight heterodimer with protein bS6.

In terms of biological role, binds as a heterodimer with protein bS6 to the central domain of the 16S rRNA, where it helps stabilize the platform of the 30S subunit. The sequence is that of Small ribosomal subunit protein bS18B from Roseiflexus castenholzii (strain DSM 13941 / HLO8).